Consider the following 360-residue polypeptide: Sphingolipid delta(4)-desaturase (360 aa).

The next 3 membrane-spanning stretches (helical) occupy residues 67-87, 89-109, and 125-145; these read AVVLLQLSIAYALKNTPVLSF, FLALAYVVGATANQNCFLCIH, and LFAIWVNLPIGVPYSASFQPY. The short motif at 109–113 is the Histidine box-1 element; the sequence is HELSH. The short motif at 146–150 is the Histidine box-2 element; the sequence is HQLHH. A run of 3 helical transmembrane segments spans residues 170-190, 202-222, and 228-248; these read VLSSLLGKAFFATFQIFFYAL, FIHLLNVLVCLVSDFILIKFG, and WYLILSSFFAGSLHPTAGHFI. Positions 288–292 match the Histidine box-3 motif; sequence HNEHH.

Belongs to the fatty acid desaturase type 1 family. DEGS subfamily.

Its subcellular location is the membrane. It carries out the reaction an N-acylsphinganine + 2 Fe(II)-[cytochrome b5] + O2 + 2 H(+) = an N-acylsphing-4-enine + 2 Fe(III)-[cytochrome b5] + 2 H2O. It participates in lipid metabolism; sphingolipid metabolism. Delta(4)-fatty-acid desaturase which introduces a double bond at the 4-position in the long-chain base (LCB) of ceramides. Required for the formation of the monounsaturated sphingoid base (E)-sphing-4-enine during glucosylceramide (GluCer) biosynthesis. In Komagataella phaffii (strain GS115 / ATCC 20864) (Yeast), this protein is Sphingolipid delta(4)-desaturase.